A 466-amino-acid chain; its full sequence is Putative transcription factor bHLH041 (466 aa).

Disordered stretches follow at residues 108–129 (PANSDYLRPPHYPSSSSSSLSP), 194–213 (LTGPSSPPSTSSSPQRKGRA), and 260–289 (RENATTHGEGSGGSGGGGRYTSGPSATQLQ). Residues 120–129 (PSSSSSSLSP) are compositionally biased toward low complexity. Residues 268–279 (EGSGGSGGGGRY) are compositionally biased toward gly residues. Residues 285–334 (ATQLQHMISERKRREKLNESFQALRSLLPPGTKKDKASVLSIAREQLSSL) form the bHLH domain.

Homodimer.

The protein localises to the nucleus. This Arabidopsis thaliana (Mouse-ear cress) protein is Putative transcription factor bHLH041 (BHLH41).